Consider the following 87-residue polypeptide: Chromosomal protein MC1b (87 aa).

Its function is as follows. Protects DNA against thermal denaturation and modulates transcription. The chain is Chromosomal protein MC1b from Methanothrix soehngenii (Methanosaeta concilii).